The chain runs to 139 residues: D-ribose pyranase (139 aa).

The active-site Proton donor is the histidine 20. Residues aspartate 28, histidine 106, and 128–130 contribute to the substrate site; that span reads YAN.

The protein belongs to the RbsD / FucU family. RbsD subfamily. Homodecamer.

The protein resides in the cytoplasm. It catalyses the reaction beta-D-ribopyranose = beta-D-ribofuranose. Its pathway is carbohydrate metabolism; D-ribose degradation; D-ribose 5-phosphate from beta-D-ribopyranose: step 1/2. In terms of biological role, catalyzes the interconversion of beta-pyran and beta-furan forms of D-ribose. This Histophilus somni (strain 129Pt) (Haemophilus somnus) protein is D-ribose pyranase.